We begin with the raw amino-acid sequence, 279 residues long: Energy-coupling factor transporter ATP-binding protein EcfA1 (279 aa).

The region spanning 6 to 240 (VRLEHVFYKY…ADAMREIGLG (235 aa)) is the ABC transporter domain. 40-47 (GHNGSGKS) contributes to the ATP binding site.

Belongs to the ABC transporter superfamily. Energy-coupling factor EcfA family. In terms of assembly, forms a stable energy-coupling factor (ECF) transporter complex composed of 2 membrane-embedded substrate-binding proteins (S component), 2 ATP-binding proteins (A component) and 2 transmembrane proteins (T component).

It is found in the cell membrane. Its function is as follows. ATP-binding (A) component of a common energy-coupling factor (ECF) ABC-transporter complex. Unlike classic ABC transporters this ECF transporter provides the energy necessary to transport a number of different substrates. The sequence is that of Energy-coupling factor transporter ATP-binding protein EcfA1 from Listeria monocytogenes serotype 4b (strain F2365).